Here is a 734-residue protein sequence, read N- to C-terminus: MALRFPRFSQGLAQDPTTRRIWFGIATAHDFESHDDITEERLYQNIFASHFGQLAIIFLWTSGNLFHVAWQGNFESWVQDPLHVRPIAHAIWDPHFGQPAVEAFTRGGALGPVNIAYSGVYQWWYTIGLRTNEDLYTGALFLLFLSAISLIAGWLHLQPKWKPSVSWFKNAESRLNHHLSGLFGVSSLAWTGHLVHVAIPGSRGEYVRWNNFLDVLPYPQGLGPLFTGQWNLYAQNPDSSSHLFGTSQGAGTAILTLLGGFHPQTQSLWLTDIAHHHLAIAFVFLVAGHMYRTNFGIGHSMKDLLEAHIPPGGRLGRGHKGLYDTINNSIHFQLGLALASLGVITSLVAQHMYSLPAYAFIAQDFTTQAALYTHHQYIAGFIMTGAFAHGAIFFIRDYNPEQNEDNVLARMLDHKEAIKSHLSWASLFLGFHTLGLYVHNDVMLAFGTPEKQILIEPIFAQWIQSAHGKTSYGFDVLLSSTNGPAFNAGRSIWLPGWLNAINENGNSLFLTIGPGDFLVHHAIALGLHTTTLILVKGALDARGSKLMPDKKDFGYSFPCDGPGRGGTCDISAWDAFYLAVFWMLNTIGWVTFYWHWKHITLWQGNVSQFNESSTYLMGWLRDYLWLNSSQLINGYNPFGTNSLSVWAWMFLFGHLVWATGFMFLISWRGYWQELIETLAWAHERTPLANLIRWRDKPVALSIVQARLVGLAHFSVGYIFTYAAFLIASTSGKFG.

The next 8 helical transmembrane spans lie at 46–69 (IFAS…FHVA), 135–158 (LYTG…LHLQ), 175–199 (LNHH…HVAI), 273–291 (IAHH…GHMY), 330–353 (IHFQ…QHMY), 369–395 (AALY…IFFI), 417–439 (AIKS…LYVH), and 517–535 (FLVH…LILV). [4Fe-4S] cluster is bound by residues Cys559 and Cys568. 2 helical membrane-spanning segments follow: residues 575-596 (AFYL…YWHW) and 643-665 (LSVW…MFLI). Chlorophyll a is bound by residues His654, Met662, and Tyr670. A phylloquinone-binding site is contributed by Trp671. Residues 707–727 (LVGLAHFSVGYIFTYAAFLIA) traverse the membrane as a helical segment.

Belongs to the PsaA/PsaB family. As to quaternary structure, the PsaA/B heterodimer binds the P700 chlorophyll special pair and subsequent electron acceptors. PSI consists of a core antenna complex that captures photons, and an electron transfer chain that converts photonic excitation into a charge separation. The eukaryotic PSI reaction center is composed of at least 11 subunits. P700 is a chlorophyll a/chlorophyll a' dimer, A0 is one or more chlorophyll a, A1 is one or both phylloquinones and FX is a shared 4Fe-4S iron-sulfur center. is required as a cofactor.

Its subcellular location is the plastid. The protein localises to the chloroplast thylakoid membrane. It catalyses the reaction reduced [plastocyanin] + hnu + oxidized [2Fe-2S]-[ferredoxin] = oxidized [plastocyanin] + reduced [2Fe-2S]-[ferredoxin]. In terms of biological role, psaA and PsaB bind P700, the primary electron donor of photosystem I (PSI), as well as the electron acceptors A0, A1 and FX. PSI is a plastocyanin-ferredoxin oxidoreductase, converting photonic excitation into a charge separation, which transfers an electron from the donor P700 chlorophyll pair to the spectroscopically characterized acceptors A0, A1, FX, FA and FB in turn. Oxidized P700 is reduced on the lumenal side of the thylakoid membrane by plastocyanin. This is Photosystem I P700 chlorophyll a apoprotein A2 from Illicium oligandrum (Star anise).